The primary structure comprises 546 residues: Arginine--tRNA ligase (546 aa).

A 'HIGH' region motif is present at residues 122-132; that stretch reads ANPTGPFTVGH.

The protein belongs to the class-I aminoacyl-tRNA synthetase family. As to quaternary structure, monomer.

The protein localises to the cytoplasm. It catalyses the reaction tRNA(Arg) + L-arginine + ATP = L-arginyl-tRNA(Arg) + AMP + diphosphate. The protein is Arginine--tRNA ligase of Thermotoga petrophila (strain ATCC BAA-488 / DSM 13995 / JCM 10881 / RKU-1).